A 295-amino-acid polypeptide reads, in one-letter code: Glycine N-methyltransferase (295 aa).

V2 bears the N-acetylvaline mark. (6S)-5-methyl-5,6,7,8-tetrahydrofolate-binding residues include S4 and Y6. The residue at position 10 (S10) is a Phosphoserine. 4 residues coordinate S-adenosyl-L-methionine: Y22, W31, Y34, and R41. Phosphotyrosine is present on Y34. K46 is subject to N6-succinyllysine. S-adenosyl-L-methionine contacts are provided by residues A65, 86–88 (DAS), 117–118 (NW), 139–142 (LGNS), and R178. N6-succinyllysine is present on residues K193, K198, and K203. (6S)-5-methyl-5,6,7,8-tetrahydrofolate is bound at residue H217. Position 223 (Y223) interacts with S-adenosyl-L-methionine. (6S)-5-methyl-5,6,7,8-tetrahydrofolate is bound at residue R242.

It belongs to the class I-like SAM-binding methyltransferase superfamily. Glycine N-methyltransferase family. Homotetramer. Expressed only in liver, pancreas, and prostate.

The protein resides in the cytoplasm. The catalysed reaction is glycine + S-adenosyl-L-methionine = sarcosine + S-adenosyl-L-homocysteine + H(+). With respect to regulation, inhibited by 5-methyltetrahydrofolate monoglutamate and by 5-methyltetrahydrofolate pentaglutamate, inhibition is much more effective by the pentaglutamate form than by the monoglutamate form. Two molecules of 5-methyltetrahydrofolate are bound per tetramer. The binding sites are localized between subunits. Inhibitor binding may preclude movements of the polypeptide chain that are necessary for enzyme activity. In terms of biological role, catalyzes the methylation of glycine by using S-adenosylmethionine (AdoMet) to form N-methylglycine (sarcosine) with the concomitant production of S-adenosylhomocysteine (AdoHcy), a reaction regulated by the binding of 5-methyltetrahydrofolate. Plays an important role in the regulation of methyl group metabolism by regulating the ratio between S-adenosyl-L-methionine and S-adenosyl-L-homocysteine. This chain is Glycine N-methyltransferase, found in Homo sapiens (Human).